We begin with the raw amino-acid sequence, 203 residues long: Probable GTP-binding protein EngB (203 aa).

Residues 22-195 (GIPEIALAGR…WEEIVNQYNQ (174 aa)) enclose the EngB-type G domain. GTP contacts are provided by residues 30 to 37 (GRSNVGKS), 57 to 61 (GKTRT), 75 to 78 (DLPG), 142 to 145 (TKAD), and 174 to 176 (VSS). Residues S37 and T59 each contribute to the Mg(2+) site.

Belongs to the TRAFAC class TrmE-Era-EngA-EngB-Septin-like GTPase superfamily. EngB GTPase family. It depends on Mg(2+) as a cofactor.

In terms of biological role, necessary for normal cell division and for the maintenance of normal septation. The protein is Probable GTP-binding protein EngB of Clostridioides difficile (strain 630) (Peptoclostridium difficile).